Reading from the N-terminus, the 780-residue chain is Replication origin-binding protein (780 aa).

Positions 39-195 constitute a Helicase ATP-binding domain; that stretch reads SFENVRQPIK…AAFKPDTQIA (157 aa). Residue 52-59 coordinates ATP; it reads AAMGSGKT.

The protein belongs to the herpesviridae OriBP family.

In terms of biological role, probably involved in DNA replication. Binds the origin of replication (ori). This is Replication origin-binding protein (U73) from Human herpesvirus 6A (strain Uganda-1102) (HHV-6 variant A).